The chain runs to 1759 residues: Collagen alpha-1(IV) chain (1759 aa).

The N-terminal stretch at 1 to 20 (MSRLSLLGLTAAVVLLSSFC) is a signal peptide. Residues 21 to 194 (QDRIHVDAAA…PGNSGYPGLK (174 aa)) constitute a propeptide, N-terminal propeptide (7S domain). 6 disordered regions span residues 51-245 (PGFG…GSYP), 269-415 (KGRD…GIDG), 548-596 (AGDP…PGLP), 618-650 (PAGI…GGPG), 666-720 (IDGK…RGIP), and 787-1522 (RGQQ…GTPG). Low complexity-rich tracts occupy residues 104 to 116 (HPGL…LPGL), 140 to 153 (PPGQ…PGRP), and 278 to 293 (PGML…PGLK). The triple-helical region stretch occupies residues 195-1530 (GAKGDPGPYG…PGYPGSPGGW (1336 aa)). Gly residues-rich tracts occupy residues 324–345 (GEQG…GEPG), 360–370 (GPLGEGTGEAG), and 379–388 (GVQGGKGLPG). Low complexity-rich tracts occupy residues 399–411 (RGPV…PGQP) and 574–595 (MPGA…SPGL). A compositionally biased stretch (low complexity) spans 833-848 (YPGPNGDAGAAGLPGP). Gly residues predominate over residues 904 to 913 (GQDGGPGYSG). Low complexity-rich tracts occupy residues 1037 to 1047 (YPGQPGDVGYP), 1219 to 1232 (ENGD…DGQP), 1247 to 1271 (PGRD…PGQD), and 1281 to 1309 (QDGY…YGMP). The span at 1310–1319 (GLPGGPGESG) shows a compositional bias: gly residues. Over residues 1341–1357 (LPGAPGVPGVEGVPGLE) the composition is skewed to low complexity. The segment covering 1410 to 1422 (PRGDDGFPGRDGL) has biased composition (basic and acidic residues). Low complexity-rich tracts occupy residues 1423–1437 (DGLP…LPGP) and 1472–1482 (PPGKAGYPGAP). Gly residues predominate over residues 1495 to 1504 (GMPGHGGDQG). The Collagen IV NC1 domain maps to 1535-1759 (GFTFAKHSQT…SRCQVCLKNR (225 aa)). 6 disulfides stabilise this stretch: Cys1550–Cys1641, Cys1583–Cys1638, Cys1595–Cys1601, Cys1660–Cys1755, Cys1694–Cys1752, and Cys1706–Cys1712. Residue Met1623 forms an S-Lysyl-methionine sulfilimine (Met-Lys) (interchain with K-1741) linkage. An S-Lysyl-methionine sulfilimine (Lys-Met) (interchain with M-1623) cross-link involves residue Lys1741.

This sequence belongs to the type IV collagen family. In terms of assembly, trimers of two alpha 1(IV) and one alpha 2(IV) chain. Type IV collagen forms a mesh-like network linked through intermolecular interactions between 7S domains and between NC1 domains. Prolines at the third position of the tripeptide repeating unit (G-X-Y) are hydroxylated in some or all of the chains. In terms of processing, type IV collagens contain numerous cysteine residues which are involved in inter- and intramolecular disulfide bonding. 12 of these, located in the NC1 domain, are conserved in all known type IV collagens. Post-translationally, the trimeric structure of the NC1 domains is stabilized by covalent bonds between Lys and Met residues.

Its subcellular location is the secreted. It is found in the extracellular space. It localises to the extracellular matrix. The protein localises to the basement membrane. Functionally, collagen type IV is specific for basement membranes. Required to restrict presynaptic growth at the neuromuscular junctions (NMJ) in late larval stage and in adult motor neurons. May play a role in axon regeneration in embryos following injury in D-type motor neurons. In Caenorhabditis elegans, this protein is Collagen alpha-1(IV) chain.